Here is a 463-residue protein sequence, read N- to C-terminus: Na(+)/H(+) antiporter NhaA 3 (463 aa).

A run of 11 helical transmembrane segments spans residues 28 to 48 (FLAT…AALL), 79 to 99 (LHHW…GLEI), 114 to 134 (IAVP…IYFV), 144 to 164 (GWGI…ALFG), 173 to 193 (LFLL…VGIF), 196 to 216 (DHLN…ILGL), 232 to 252 (LVLW…GVLV), 305 to 325 (VLHP…NAGV), 344 to 364 (VAAA…VAAI), 377 to 397 (YGHL…SLFI), and 413 to 433 (IGIL…LRVL). Residues 444–463 (TDEPVPRLPPRPWRAPVPAK) are disordered. Positions 449–463 (PRLPPRPWRAPVPAK) are enriched in pro residues.

It belongs to the NhaA Na(+)/H(+) (TC 2.A.33) antiporter family.

The protein localises to the cell membrane. The catalysed reaction is Na(+)(in) + 2 H(+)(out) = Na(+)(out) + 2 H(+)(in). Na(+)/H(+) antiporter that extrudes sodium in exchange for external protons. In Frankia alni (strain DSM 45986 / CECT 9034 / ACN14a), this protein is Na(+)/H(+) antiporter NhaA 3.